The sequence spans 353 residues: Uroporphyrinogen decarboxylase (353 aa).

Residues 27 to 31 (RQAGR), F46, D76, Y152, S207, and H321 contribute to the substrate site.

The protein belongs to the uroporphyrinogen decarboxylase family. In terms of assembly, homodimer.

It is found in the cytoplasm. The catalysed reaction is uroporphyrinogen III + 4 H(+) = coproporphyrinogen III + 4 CO2. The protein operates within porphyrin-containing compound metabolism; protoporphyrin-IX biosynthesis; coproporphyrinogen-III from 5-aminolevulinate: step 4/4. Catalyzes the decarboxylation of four acetate groups of uroporphyrinogen-III to yield coproporphyrinogen-III. The chain is Uroporphyrinogen decarboxylase from Listeria monocytogenes serovar 1/2a (strain ATCC BAA-679 / EGD-e).